Consider the following 443-residue polypeptide: Probable cytosolic iron-sulfur protein assembly protein 1 (443 aa).

Disordered regions lie at residues M1–A27 and R95–E124. The segment covering T8 to S21 has biased composition (low complexity). WD repeat units lie at residues T14–S57 and G61–D103. Residues A113–E124 are compositionally biased toward acidic residues. WD repeat units lie at residues G135–T174, E180–V219, C221–R248, S255–N294, V323–N362, and A391–Q440.

It belongs to the WD repeat CIA1 family.

Functionally, essential component of the cytosolic iron-sulfur (Fe/S) protein assembly machinery. Required for the maturation of extramitochondrial Fe/S proteins. This chain is Probable cytosolic iron-sulfur protein assembly protein 1, found in Phaeosphaeria nodorum (strain SN15 / ATCC MYA-4574 / FGSC 10173) (Glume blotch fungus).